Consider the following 294-residue polypeptide: 33 kDa chaperonin (294 aa).

Intrachain disulfides connect cysteine 239–cysteine 241 and cysteine 272–cysteine 275.

It belongs to the HSP33 family. In terms of processing, under oxidizing conditions two disulfide bonds are formed involving the reactive cysteines. Under reducing conditions zinc is bound to the reactive cysteines and the protein is inactive.

It is found in the cytoplasm. Redox regulated molecular chaperone. Protects both thermally unfolding and oxidatively damaged proteins from irreversible aggregation. Plays an important role in the bacterial defense system toward oxidative stress. The sequence is that of 33 kDa chaperonin from Lacticaseibacillus casei (strain BL23) (Lactobacillus casei).